A 62-amino-acid chain; its full sequence is Large ribosomal subunit protein bL32 (62 aa).

Positions 1 to 18 are enriched in basic residues; sequence MGVPKKRTSKMRRDRRRA. The tract at residues 1 to 22 is disordered; it reads MGVPKKRTSKMRRDRRRAANNN.

Belongs to the bacterial ribosomal protein bL32 family.

In Myxococcus xanthus (strain DK1622), this protein is Large ribosomal subunit protein bL32.